A 163-amino-acid chain; its full sequence is MKELEKYSTCLKRIDEFSQNLGIKKKDRTIFKMKQSENENEKCLVLENGSFDSPEPWFVIDENDEIHTLLSLQSLKNILESLKQSQKENFELRLEKAIYQQIPVDFNDVWTVAMDEIKQKAQNGTMEVSIDLEKLISKIKQEHPNLFVDMQAMIERVNQNERL.

Belongs to the UPF0763 family.

This is UPF0763 protein C8J_0930 from Campylobacter jejuni subsp. jejuni serotype O:6 (strain 81116 / NCTC 11828).